The primary structure comprises 256 residues: MSSSLHIESIGQGQELVILHGWGVNSSVFTPLHASLSEYRVHYVDLPGFGHSDPIDGDLDDWVDAIINQLPNTAIWIGWSLGGLVATKAALRYPEQVRGLVTIASSPCFMAREDESWPGIPPQVLSQFSTQLQQNIGKTIERFLAIQVMGSATAKEDIKQLKELVLSRPLPKNSALAQGLKMLENIDLRAQLPQIEQPWLRVWGRLDGLVPRRVPPLMPNHQAHFTDLLLPKASHAPFLSHRDEFLTGLTDWLNKF.

In terms of domain architecture, AB hydrolase-1 spans Leu-16–Ser-240. Substrate-binding positions include Trp-22, Ser-80–Leu-81, and Phe-143–Gln-147. Catalysis depends on Ser-80, which acts as the Nucleophile. Catalysis depends on residues Asp-207 and His-235. His-235 provides a ligand contact to substrate.

The protein belongs to the AB hydrolase superfamily. Carboxylesterase BioH family. In terms of assembly, monomer.

The protein localises to the cytoplasm. The catalysed reaction is 6-carboxyhexanoyl-[ACP] methyl ester + H2O = 6-carboxyhexanoyl-[ACP] + methanol + H(+). It participates in cofactor biosynthesis; biotin biosynthesis. The physiological role of BioH is to remove the methyl group introduced by BioC when the pimeloyl moiety is complete. It allows to synthesize pimeloyl-ACP via the fatty acid synthetic pathway through the hydrolysis of the ester bonds of pimeloyl-ACP esters. The protein is Pimeloyl-[acyl-carrier protein] methyl ester esterase of Shewanella woodyi (strain ATCC 51908 / MS32).